A 232-amino-acid polypeptide reads, in one-letter code: 2-C-methyl-D-erythritol 4-phosphate cytidylyltransferase (232 aa).

This sequence belongs to the IspD/TarI cytidylyltransferase family. IspD subfamily.

The catalysed reaction is 2-C-methyl-D-erythritol 4-phosphate + CTP + H(+) = 4-CDP-2-C-methyl-D-erythritol + diphosphate. It participates in isoprenoid biosynthesis; isopentenyl diphosphate biosynthesis via DXP pathway; isopentenyl diphosphate from 1-deoxy-D-xylulose 5-phosphate: step 2/6. Its function is as follows. Catalyzes the formation of 4-diphosphocytidyl-2-C-methyl-D-erythritol from CTP and 2-C-methyl-D-erythritol 4-phosphate (MEP). The sequence is that of 2-C-methyl-D-erythritol 4-phosphate cytidylyltransferase from Geobacter metallireducens (strain ATCC 53774 / DSM 7210 / GS-15).